A 345-amino-acid chain; its full sequence is UDP-N-acetylenolpyruvoylglucosamine reductase (345 aa).

The region spanning V15–K218 is the FAD-binding PCMH-type domain. The active site involves R161. S230 functions as the Proton donor in the catalytic mechanism. E327 is a catalytic residue.

The protein belongs to the MurB family. It depends on FAD as a cofactor.

It localises to the cytoplasm. It catalyses the reaction UDP-N-acetyl-alpha-D-muramate + NADP(+) = UDP-N-acetyl-3-O-(1-carboxyvinyl)-alpha-D-glucosamine + NADPH + H(+). Its pathway is cell wall biogenesis; peptidoglycan biosynthesis. Cell wall formation. The protein is UDP-N-acetylenolpyruvoylglucosamine reductase of Blochmanniella floridana.